Reading from the N-terminus, the 459-residue chain is Glutathione reductase (459 aa).

Residues serine 14, glycine 15, glutamate 34, threonine 41, cysteine 42, lysine 50, and alanine 114 each coordinate FAD. A glutathione-binding site is contributed by serine 14. Cysteine 42 and cysteine 47 are oxidised to a cystine. Positions 177, 180, 197, 203, and 262 each coordinate NADP(+). Positions 313 and 321 each coordinate FAD. Arginine 329 serves as a coordination point for glutathione. Alanine 351 is an NADP(+) binding site. FAD is bound at residue histidine 448. Residue histidine 448 is the Proton acceptor of the active site.

Belongs to the class-I pyridine nucleotide-disulfide oxidoreductase family. As to quaternary structure, homodimer. FAD is required as a cofactor.

The protein localises to the cytoplasm. It carries out the reaction 2 glutathione + NADP(+) = glutathione disulfide + NADPH + H(+). In terms of biological role, catalyzes the reduction of glutathione disulfide (GSSG) to reduced glutathione (GSH). Constitutes the major mechanism to maintain a high GSH:GSSG ratio in the cytosol. This chain is Glutathione reductase (gor), found in Nostoc sp. (strain PCC 7120 / SAG 25.82 / UTEX 2576).